The following is a 366-amino-acid chain: tRNA/tmRNA (uracil-C(5))-methyltransferase (366 aa).

The S-adenosyl-L-methionine site is built by Q190, Y218, N223, E239, and D299. The active-site Nucleophile is C324. The Proton acceptor role is filled by E358.

It belongs to the class I-like SAM-binding methyltransferase superfamily. RNA M5U methyltransferase family. TrmA subfamily.

The catalysed reaction is uridine(54) in tRNA + S-adenosyl-L-methionine = 5-methyluridine(54) in tRNA + S-adenosyl-L-homocysteine + H(+). It catalyses the reaction uridine(341) in tmRNA + S-adenosyl-L-methionine = 5-methyluridine(341) in tmRNA + S-adenosyl-L-homocysteine + H(+). In terms of biological role, dual-specificity methyltransferase that catalyzes the formation of 5-methyluridine at position 54 (m5U54) in all tRNAs, and that of position 341 (m5U341) in tmRNA (transfer-mRNA). In Escherichia coli O127:H6 (strain E2348/69 / EPEC), this protein is tRNA/tmRNA (uracil-C(5))-methyltransferase.